We begin with the raw amino-acid sequence, 720 residues long: Serine/threonine-protein kinase KIN82 (720 aa).

Composition is skewed to polar residues over residues 1 to 13 (MTQQ…SQRL) and 99 to 116 (FNHN…STSE). Disordered stretches follow at residues 1 to 20 (MTQQ…RSMS) and 99 to 128 (FNHN…RSTI). The residue at position 203 (Ser203) is a Phosphoserine. Residues 230–241 (SPLANLSLSNSP) are compositionally biased toward low complexity. Residues 230 to 257 (SPLANLSLSNSPIDSPRKNSETRKDQIP) are disordered. Positions 244–255 (SPRKNSETRKDQ) are enriched in basic and acidic residues. The Protein kinase domain maps to 324–602 (FEKIRLLGQG…AADIKRHPFF (279 aa)). ATP-binding positions include 330–338 (LGQGDVGKV) and Lys353. The Proton acceptor role is filled by Asp449.

This sequence belongs to the protein kinase superfamily. Ser/Thr protein kinase family. KIN82 subfamily.

It catalyses the reaction L-seryl-[protein] + ATP = O-phospho-L-seryl-[protein] + ADP + H(+). The catalysed reaction is L-threonyl-[protein] + ATP = O-phospho-L-threonyl-[protein] + ADP + H(+). In terms of biological role, flippase activator that phosphorylates DFN1 and DFN2 and which is involved in the generation of phospholipid asymmetry in membranes by the inward translocation of phospholipids. The chain is Serine/threonine-protein kinase KIN82 (KIN82) from Saccharomyces cerevisiae (strain ATCC 204508 / S288c) (Baker's yeast).